A 109-amino-acid polypeptide reads, in one-letter code: UPF0060 membrane protein PCC8801_1733 (109 aa).

The next 4 membrane-spanning stretches (helical) occupy residues L7–W27, Y36–A56, F58–W78, and S87–P107.

It belongs to the UPF0060 family.

Its subcellular location is the cell inner membrane. In Rippkaea orientalis (strain PCC 8801 / RF-1) (Cyanothece sp. (strain PCC 8801)), this protein is UPF0060 membrane protein PCC8801_1733.